The sequence spans 276 residues: MSVKKKDLITLQDPEAKYPLPLIEKEQINHNTRRFRFGLPSPDHVLGLPVGNYVHLLAQINNELVIRAYTPVSSDDDQGFVDLIIKIYFKNVHPKYPEGGKMTQYLENMKIGDTILFRGPTGRLFYNEPGTLLIKTDKTSEPEKKLVHHLGMIAGGTGITPMLQLIRHITKDTSDGTRMSLLFANQTEEDILLRKELEEVATTHQNQFSLWYTLDRPPSGWEYSSGFITADMIKEHLPPPGEATLILVCGPPPLIQEAAHPSLEQLGYTKDMIFTY.

An FAD-binding FR-type domain is found at 15–127 (EAKYPLPLIE…RGPTGRLFYN (113 aa)). Position 17 is an N6-acetyllysine (Lys-17). Position 18 is a phosphotyrosine (Tyr-18). FAD contacts are provided by residues 107–137 (ENMK…IKTD) and 146–181 (LVHH…RMSL).

Belongs to the flavoprotein pyridine nucleotide cytochrome reductase family. It depends on FAD as a cofactor.

The enzyme catalyses 2 Fe(III)-[cytochrome b5] + NADH = 2 Fe(II)-[cytochrome b5] + NAD(+) + H(+). Its function is as follows. NADH-cytochrome b5 reductases are involved in desaturation and elongation of fatty acids, cholesterol biosynthesis, drug metabolism, and, in erythrocyte, methemoglobin reduction. Responsible for NADH-dependent lucigenin chemiluminescence in spermatozoa by reducing both lucigenin and 2-[4-iodophenyl]-3-[4-nitrophenyl]-5-[2,4-disulfophenyl]-2H tetrazolium monosodium salt (WST-1). The protein is NADH-cytochrome b5 reductase 2 (Cyb5r2) of Rattus norvegicus (Rat).